A 1307-amino-acid polypeptide reads, in one-letter code: Rho1 guanine nucleotide exchange factor TUS1 (1307 aa).

A compositionally biased stretch (polar residues) spans 1–10 (MYRYNRSSPF). Disordered stretches follow at residues 1 to 144 (MYRY…FIGN), 164 to 194 (PFAN…SDLR), and 219 to 239 (EDSE…NVSG). Basic and acidic residues predominate over residues 12–29 (RTPEKRVSRQESQRKSIE). The span at 37 to 79 (NTRNSFLDDSDNGTDNISIGWTPISDTQQFQSPVPQAFTFTSK) shows a compositional bias: polar residues. Low complexity predominate over residues 87–97 (TSSSESTPKST). The span at 176-194 (SPRDSSKQQAHFSDESDLR) shows a compositional bias: basic and acidic residues. The DH domain occupies 467 to 657 (QRQSFIFDLI…EKLNFEVNQV (191 aa)). A PH domain is found at 715–877 (KLVLSGTVYK…WIDAIMESFK (163 aa)). The disordered stretch occupies residues 780 to 802 (TSKQPLRNYSQKEHKSPMHNFST). The 342-residue stretch at 938 to 1279 (TTRILCCEDV…KLASSERREK (342 aa)) folds into the CNH domain.

Interacts with RHO1.

In terms of biological role, guanine nucleotide-exchange factor (GEF) for RHO1 that stimulates the exchange of RHO1 GDP-bound form into GTP-bound form. Required for signaling of cell wall defects to RHO1. This is Rho1 guanine nucleotide exchange factor TUS1 (TUS1) from Saccharomyces cerevisiae (strain ATCC 204508 / S288c) (Baker's yeast).